The chain runs to 591 residues: Probable acetolactate synthase large subunit (591 aa).

Glu47 lines the thiamine diphosphate pocket. Residues Arg149, 258-279 (HGTK…IGCR), and 301-320 (DIDP…IVGD) each bind FAD. Residues 396 to 476 (QNQMWMAHFF…VVICIFDNRT (81 aa)) are thiamine pyrophosphate binding. 2 residues coordinate Mg(2+): Asp447 and Asn474.

It belongs to the TPP enzyme family. As to quaternary structure, dimer of large and small chains. Requires Mg(2+) as cofactor. Thiamine diphosphate serves as cofactor.

The catalysed reaction is 2 pyruvate + H(+) = (2S)-2-acetolactate + CO2. It participates in amino-acid biosynthesis; L-isoleucine biosynthesis; L-isoleucine from 2-oxobutanoate: step 1/4. The protein operates within amino-acid biosynthesis; L-valine biosynthesis; L-valine from pyruvate: step 1/4. This is Probable acetolactate synthase large subunit (ilvB) from Methanocaldococcus jannaschii (strain ATCC 43067 / DSM 2661 / JAL-1 / JCM 10045 / NBRC 100440) (Methanococcus jannaschii).